We begin with the raw amino-acid sequence, 436 residues long: GTPase Der (436 aa).

EngA-type G domains are found at residues 4-167 and 175-351; these read PTVA…PTEV and IRFS…ESQN. Residues 10–17, 57–61, 119–122, 181–188, 229–233, and 294–297 contribute to the GTP site; these read GRPNVGKS, DTGGI, NKVD, DTAGM, and NKWD. The KH-like domain maps to 352–436; that stretch reads RRISSAVLND…PIHLIARKRK (85 aa).

It belongs to the TRAFAC class TrmE-Era-EngA-EngB-Septin-like GTPase superfamily. EngA (Der) GTPase family. As to quaternary structure, associates with the 50S ribosomal subunit.

GTPase that plays an essential role in the late steps of ribosome biogenesis. The protein is GTPase Der of Streptococcus thermophilus (strain CNRZ 1066).